Here is a 318-residue protein sequence, read N- to C-terminus: 2-desacetyl-2-hydroxyethyl bacteriochlorophyllide A dehydrogenase (318 aa).

The protein operates within porphyrin-containing compound metabolism; bacteriochlorophyll biosynthesis (light-independent). Its function is as follows. This protein catalyzes the penultimate step in bacteriochlorophyll a biosynthesis. The chain is 2-desacetyl-2-hydroxyethyl bacteriochlorophyllide A dehydrogenase (bchC) from Cereibacter sphaeroides (strain ATCC 17023 / DSM 158 / JCM 6121 / CCUG 31486 / LMG 2827 / NBRC 12203 / NCIMB 8253 / ATH 2.4.1.) (Rhodobacter sphaeroides).